A 1288-amino-acid chain; its full sequence is Peroxidasin homolog (1288 aa).

A signal peptide spans 1-16; sequence MNLLLYLLLLVPWVLG. In terms of domain architecture, LRRNT spans 17–51; it reads SEDGCPAKCTCDKKGFTVDCSNAGLTRIPKGISSN. 7 LRR repeats span residues 27-49, 50-72, 73-96, 97-120, 122-143, 145-168, and 204-227; these read CDKKGFTVDCSNAGLTRIPKGIS, SNVRSLVLRNNRIHTLIKSDLEG, FPLLESLVLTHNKIKVVEENILDH, LPELKRLSLSHNLLVYIPPLASES, PLASLNLKRNHIQFIDERWLLQ, FPELVQIDLSHNRIQSLRTKLFEN, and AYCTNPVELRHQAIDEVEESLLKC. An LRRCT domain is found at 180–228; that stretch reads NPWNCDCRVTKVKALLRKVEWERKAYCTNPVELRHQAIDEVEESLLKCA. A glycan (N-linked (GlcNAc...) asparagine) is linked at Asn247. The disordered stretch occupies residues 304–323; it reads LRQSHHSNGAPQFTYKPRDN. 2 Ig-like C2-type domains span residues 314-400 and 407-494; these read PQFT…FSLD and PNIY…AKLT. A disulfide bridge connects residues Cys335 and Cys384. 2 LRR repeats span residues 356–381 and 387–412; these read SSRKKQLGLSNNVLRIYPFLEEDSGR and VNSLGKVSHTFSLDLISSIPPNIYEG. Cys428 and Cys478 are joined by a disulfide. N-linked (GlcNAc...) asparagine glycosylation occurs at Asn594. Cys624 and Cys640 are disulfide-bonded. Asp718 provides a ligand contact to heme b. His719 (proton acceptor) is an active-site residue. Asp720 contacts Ca(2+). Disulfide bonds link Cys739/Cys749 and Cys743/Cys770. A glycan (N-linked (GlcNAc...) asparagine) is linked at Asn740. Ca(2+) is bound by residues Thr802, Phe804, Asp806, and Ser808. A glycan (N-linked (GlcNAc...) asparagine) is linked at Asn857. The heme b site is built by Glu876 and His972. LRR repeat units follow at residues 998 to 1022 and 1049 to 1073; these read KAFFTPELVLTEGGIDPLLRGLFAS and SLDLAVMNIQRSRDHGLPSYTEYRQ. 2 disulfides stabilise this stretch: Cys1075–Cys1132 and Cys1173–Cys1200. An LRR 12 repeat occupies 1168-1189; it reads LARLLCDNGDEIDRIQKDVFMY.

The protein belongs to the peroxidase family. XPO subfamily. It depends on Ca(2+) as a cofactor. Heme b is required as a cofactor.

The protein localises to the secreted. Its subcellular location is the extracellular space. It is found in the extracellular matrix. It carries out the reaction L-lysyl-[collagen] + L-methionyl-[collagen] + H2O2 = [collagen]-L-lysyl-N-S-L-methionyl-[collagen] + 2 H2O + H(+). It catalyses the reaction bromide + H2O2 = hypobromite + H2O. The enzyme catalyses L-lysyl-[collagen] + L-methionyl-[collagen] + hypobromite = [collagen]-L-lysyl-N-S-L-methionyl-[collagen] + bromide + H2O + H(+). The catalysed reaction is L-tyrosyl-[protein] + bromide + H2O2 + H(+) = 3-bromo-L-tyrosyl-[protein] + 2 H2O. It carries out the reaction hypobromite + L-tyrosyl-[protein] + H(+) = 3-bromo-L-tyrosyl-[protein] + H2O. Its function is as follows. Catalyzes the two-electron oxidation of bromide by hydrogen peroxide and generates hypobromite as a reactive intermediate which mediates the formation of sulfilimine cross-links between methionine and hydroxylysine residues within an uncross-linked collagen IV NC1 hexamer. Plays a role in the attachment of tissues and in axonal guidance during early developmental stages. May functionally antagonize the peroxidasin pxn-2 to maintain neuronal development. The chain is Peroxidasin homolog from Caenorhabditis briggsae.